The primary structure comprises 302 residues: Probable WRKY transcription factor 40 (302 aa).

The segment at residues 140–206 (DTTLVVKDGY…YEGEHNHPMP (67 aa)) is a DNA-binding region (WRKY).

It belongs to the WRKY group III family.

It is found in the nucleus. Transcription factor. Interacts specifically with the W box (5'-(T)TGAC[CT]-3'), a frequently occurring elicitor-responsive cis-acting element. This Arabidopsis thaliana (Mouse-ear cress) protein is Probable WRKY transcription factor 40.